A 70-amino-acid polypeptide reads, in one-letter code: DNA gyrase inhibitor YacG (70 aa).

The Zn(2+) site is built by Cys20, Cys23, Cys35, and Cys39.

This sequence belongs to the DNA gyrase inhibitor YacG family. As to quaternary structure, interacts with GyrB. It depends on Zn(2+) as a cofactor.

Its function is as follows. Inhibits all the catalytic activities of DNA gyrase by preventing its interaction with DNA. Acts by binding directly to the C-terminal domain of GyrB, which probably disrupts DNA binding by the gyrase. The polypeptide is DNA gyrase inhibitor YacG (Rhizobium etli (strain ATCC 51251 / DSM 11541 / JCM 21823 / NBRC 15573 / CFN 42)).